The primary structure comprises 525 residues: UPF0288 protein MA_3997 (525 aa).

It belongs to the UPF0288 family.

The sequence is that of UPF0288 protein MA_3997 from Methanosarcina acetivorans (strain ATCC 35395 / DSM 2834 / JCM 12185 / C2A).